A 374-amino-acid polypeptide reads, in one-letter code: Cysteine-type anaerobic sulfatase-maturating enzyme (374 aa).

In terms of domain architecture, Radical SAM core spans 1–227 (MKSLSMLIKP…LNKLFDLWFK (227 aa)). 2 residues coordinate [4Fe-4S] cluster: Cys15 and Cys19. An S-adenosyl-L-methionine-binding site is contributed by Tyr21. Cys22 is a binding site for [4Fe-4S] cluster. S-adenosyl-L-methionine-binding residues include Gly66, Ser122, Arg134, and Leu195. Positions 255, 261, and 276 each coordinate [4Fe-4S] cluster. The active-site Proton acceptor is the Asp277. [4Fe-4S] cluster-binding residues include Cys317, Cys320, Cys326, Cys330, and Cys348.

This sequence belongs to the radical SAM superfamily. Anaerobic sulfatase-maturating enzyme family. [4Fe-4S] cluster serves as cofactor.

It carries out the reaction L-cysteinyl-[sulfatase] + S-adenosyl-L-methionine + H2O = 3-oxo-L-alanyl-[sulfatase] + hydrogen sulfide + 5'-deoxyadenosine + L-methionine + 2 H(+). The protein operates within protein modification; sulfatase oxidation. Its function is as follows. Involved in 'Cys-type' sulfatase maturation under anaerobic conditions. Catalyzes the post-translational modification of cysteine into 3-oxoalanine (also known as C(alpha)-formylglycine (FGly)), by a free radical chemical mechanism initiated via the reductive cleavage of S-adenosyl-L-methionine (SAM). The polypeptide is Cysteine-type anaerobic sulfatase-maturating enzyme (Clostridium novyi (strain NT)).